The primary structure comprises 761 residues: Subtilisin-like protease SBT3 (761 aa).

An N-terminal signal peptide occupies residues 1 to 22 (MELLHLLLFSWALSAHLFLALA). A propeptide spanning residues 23–112 (QRSTYIVHLD…AYKDRTVEPH (90 aa)) is cleaved from the precursor. In terms of domain architecture, Inhibitor I9 spans 26–110 (TYIVHLDKSL…ISAYKDRTVE (85 aa)). In terms of domain architecture, Peptidase S8 spans 116–606 (TSDFLKLNPS…AGHVDPNRAL (491 aa)). The active-site Charge relay system is the D144. C170 and C181 form a disulfide bridge. N177 and N203 each carry an N-linked (GlcNAc...) (complex) asparagine; alternate glycan. N-linked (GlcNAc...) (paucimannose) asparagine; alternate glycosylation is found at N177 and N203. The Charge relay system role is filled by H215. A glycan (N-linked (GlcNAc...) (paucimannose) asparagine; partial) is linked at N376. Cysteines 382 and 401 form a disulfide. S538 functions as the Charge relay system in the catalytic mechanism. The tract at residues 574–598 (LDNTRKPIKDSDNNKAATPLDMGAG) is disordered. Over residues 575 to 586 (DNTRKPIKDSDN) the composition is skewed to basic and acidic residues. Cysteines 624 and 645 form a disulfide. Residues N697 and N745 are each glycosylated (N-linked (GlcNAc...) (complex) asparagine; alternate). 2 N-linked (GlcNAc...) (paucimannose) asparagine; alternate glycosylation sites follow: N697 and N745. Positions 756 to 761 (PIIEVW) are necessary for prodomain cleavage and secretion.

Belongs to the peptidase S8 family. In terms of assembly, homodimer. Post-translationally, propeptide is internally cleaved at Asn-38 and Asp-52 in a pH-dependent manner leading to the dissociation of the propeptide from the catalytic domain and resulting in the release of the active subtilase. Cleavage occurs at pH 5.7 and to a stronger extent at pH 5.2. Expressed in flowers, cotyledons and leaves with the highest expression in roots.

It is found in the secreted. Inhibited by 1 mM 4-(2-aminoethyl)-benzenesulfonyl fluoride (AEBSF), a general inhibitor of serine proteinases, but not by the more selective serine protease inhibitors N-alpha-tosyl-L-lysinyl-chloromethylketone (TLCK), N-tosyl-L-phenylalaninyl-chloromethylketone (TPCK), leupeptin, aprotinin or benzamidine. Its proteolytic activity is autoinhibited by the non-covalent binding of the propeptide to the catalytic domain. No effect on activity by the addition of CaCl(2) or calcium chelators. In terms of biological role, serine protease. Has preference for Gln in the P1 position and Lys in the P2 position of oligopeptide substrates. Active also with His in the P1 position. Involved in resistance against insects partly by regulating expression of systemic wound response genes and possibly by its post-ingestive activity in the insect gut. Apart from the role in defense, may be involved in regulation of pectin methylesterases (PMEs) activity and pectin methylesterification of the cell wall. The polypeptide is Subtilisin-like protease SBT3 (Solanum lycopersicum (Tomato)).